The chain runs to 57 residues: Conotoxin reg3.17 (57 aa).

A signal peptide spans 1 to 16 (TICLLLFPLTVVPLDG). Positions 17–44 (DQPAHQPAVRKHNIKSAVQLRQWDEEQQ) are excised as a propeptide. Disulfide bonds link cysteine 45/cysteine 57, cysteine 46/cysteine 53, and cysteine 50/cysteine 56.

This sequence belongs to the conotoxin M superfamily. In terms of tissue distribution, expressed by the venom duct.

It is found in the secreted. This Conus regius (Crown cone) protein is Conotoxin reg3.17.